We begin with the raw amino-acid sequence, 321 residues long: Probable 2-oxoglutarate-dependent dioxygenase AOP1.2 (321 aa).

The Fe2OG dioxygenase domain maps to Thr165–Pro270. Positions 194, 196, and 251 each coordinate Fe cation. 2-oxoglutarate is bound at residue Arg261.

This sequence belongs to the iron/ascorbate-dependent oxidoreductase family. Fe(2+) is required as a cofactor.

Probable 2-oxoglutarate-dependent dioxygenase that may be involved in glucosinolates biosynthesis. May play a role in the production of aliphatic glucosinolates. The protein is Probable 2-oxoglutarate-dependent dioxygenase AOP1.2 (AOP1.2) of Arabidopsis thaliana (Mouse-ear cress).